Reading from the N-terminus, the 111-residue chain is DNA-directed RNA polymerase subunit Rpo11 (111 aa).

The protein belongs to the archaeal Rpo11/eukaryotic RPB11/RPC19 RNA polymerase subunit family. As to quaternary structure, part of the RNA polymerase complex.

Its subcellular location is the cytoplasm. The catalysed reaction is RNA(n) + a ribonucleoside 5'-triphosphate = RNA(n+1) + diphosphate. DNA-dependent RNA polymerase (RNAP) catalyzes the transcription of DNA into RNA using the four ribonucleoside triphosphates as substrates. This is DNA-directed RNA polymerase subunit Rpo11 from Thermoplasma volcanium (strain ATCC 51530 / DSM 4299 / JCM 9571 / NBRC 15438 / GSS1).